We begin with the raw amino-acid sequence, 445 residues long: tRNA-2-methylthio-N(6)-dimethylallyladenosine synthase (445 aa).

Positions 7–121 (KHFYIKSFGC…LPELIEKAAS (115 aa)) constitute an MTTase N-terminal domain. Residues Cys16, Cys52, Cys84, Cys156, Cys160, and Cys163 each coordinate [4Fe-4S] cluster. In terms of domain architecture, Radical SAM core spans 142–374 (RQVGASAFLT…QALLNQQQFD (233 aa)). Residues 377-438 (QQTIGRKATV…PNSVKGQFLD (62 aa)) enclose the TRAM domain.

It belongs to the methylthiotransferase family. MiaB subfamily. Monomer. Requires [4Fe-4S] cluster as cofactor.

It localises to the cytoplasm. The catalysed reaction is N(6)-dimethylallyladenosine(37) in tRNA + (sulfur carrier)-SH + AH2 + 2 S-adenosyl-L-methionine = 2-methylsulfanyl-N(6)-dimethylallyladenosine(37) in tRNA + (sulfur carrier)-H + 5'-deoxyadenosine + L-methionine + A + S-adenosyl-L-homocysteine + 2 H(+). Its function is as follows. Catalyzes the methylthiolation of N6-(dimethylallyl)adenosine (i(6)A), leading to the formation of 2-methylthio-N6-(dimethylallyl)adenosine (ms(2)i(6)A) at position 37 in tRNAs that read codons beginning with uridine. The chain is tRNA-2-methylthio-N(6)-dimethylallyladenosine synthase from Zymomonas mobilis subsp. mobilis (strain ATCC 31821 / ZM4 / CP4).